The chain runs to 191 residues: Large ribosomal subunit protein uL29m (191 aa).

It belongs to the universal ribosomal protein uL29 family. As to quaternary structure, component of the mitochondrial large ribosomal subunit. Mature mitochondrial ribosomes consist of a small (37S) and a large (54S) subunit. The 37S subunit contains at least 33 different proteins and 1 molecule of RNA (15S). The 54S subunit contains at least 45 different proteins and 1 molecule of RNA (21S).

The protein resides in the mitochondrion. This is Large ribosomal subunit protein uL29m (MRPL4) from Sclerotinia sclerotiorum (strain ATCC 18683 / 1980 / Ss-1) (White mold).